The primary structure comprises 2407 residues: MVQVPSTNTVKESRHVAISGLPSTLPDDRLQLHFTKFGEIQRLVRQHGNPEIVLVSYMDARGALRARSTKPQFEDSIEYKISAYIPEPTQNSSMASMSSTPSSGQSSSPRNAELSPQRYGDTRGAEVKSPSFRNQMEARRGGPHLSVQSQQRHSREYWPIPEFPSESTACVVYEIQSGSTPERDLFELVKKHSKRSGVPIDIQLESTTEPGWKKARVHYYRLDTDGLKADKSLILGRPPKFRVYYPTSGEQKHPQCHPSTSYAIPKLKGDHLLKASCSVHVPHLDRHSPDHYRRRFESYGQVIDVDMVKSNDNKAFAVVQFTNIDDAQKALQDTNIPKPMSYQSRPSHRIIIFYLPIECTNEEIMLIIRSLSDRIVDICVDWWDRSAVITLDDMEPANLLLKRMKLVGRNNFGEHKVAVDFCSDRFNLYFINRKKENIEVAARSSSPTSKSENDQGSSSPSSSRDRQNLHDPLQTRSSVEHHTNQEDQENNASGSDSSSDSDSEEGSSSSNEDSDEQNDVDEEDDEDVVSEEKRHEPEEGKSSSPGNGHRDESNGDKDHEDSSERFSQPSTSSHHETSHSPEKDSEAYQSRSFSPLNYQSQSPGYEFLESKEIKQEFSPTTSSASSSDLELDMEMPDNPLTRMLERMHWRPFIDVSSFVNRIDEIVELNQKARASYEKFTGRPFPKCNNDEVLSIQKIVFHEPRDYYYYENPCSELEVRIRDWRKLSDTADLDDFRATDSKELGRDQPAGGRTSGRPSLDESRTNRLSFDSTHHPAELAQRSHSLCIGPMTPSTPFPTSQPLLVNTTHLPGTSQPSTSGGITTPRSSQPPPLMSPVSRHNSMSSTGRPASIQTLRHQSVMFPPDVSIPPPPIPPTHDEMMAPRGTPPSRRSSETMVPLRSPPFGTPIQNLLTMPIVPPPHLIAATSTGTHSVSSSAHSTPRHSISGTPVHCEPSNSKTSQPPTPKSRPEKVQIRHDTISKSGPSNAINALQARSQSMTSGDPKKSAPSTPVVRDAGSDLVAQIMSNQPNLGLRKLPRIEKKSSALQNIQNHQPPHSNANSTPSTPSTSTHQAMFKDKEKERKKKEKEKEEREREARREMKRKETKEERNKRKEMERAKRLEDERQERKREKKKERDERKKEKEKVRKKAEKEKLKKKKHRKGDSSDESDSDSNDELDLDVRKSTKEMTQEEKDHQLALLLSKGGIIENLKSRRRSDKRAHDSFEKMQQKSQQRRVLIESSDDEGGKDGDKGNSSNGEESDSEKADLPPPPAPPSLSESADQRLKVLKEREKGELTTSSDDEDHNDAGEIHQQRLTEDRENRKRQKSLTAYSSDEQGERKNVPKRMRRDDSEDAAAKHPGWSAKDDQKQRKRKLEHRRSSEDESKKNAKRDFRDIPHEDVSDEEETEDGSRSRRQSTSSTISNVTAKERKEKSGKTPLRIVPEPTGTPLLSPKILSPKHLSPKTSTSSTKRSSISDHENLISPRQRNRTTSSTSTATTSSKHEALSIPEKPLSPPVTAKSSVSSIDDPSIRDEFSMNSAADSPMSTTGRPMVLTKAAMKAFNSTPPKKKNSSSGQHDSSSGSSSDSSSSDGSTSSDDSSDDEVPKQTEPVTSIPVVASDNGSPENVVVETPSIVSQTPREPEPFTISEQSSESEPEAVPECPEASVEPQMETSQNVEPVSEEHEDSHEHGDSEVAVESQQQPLEHQEEKEELENKILDVAAEHHEEQVQGDEDSVESSIPAPSDEPDPVTQAQEKSAHTLISDQETDQAVQSIFDEEEADEFPQYPDFGISTNEKEVSGKDPHNIKPTEPLNNGHTDLLFSPSSSAHASEKQSTKSEDDMEEDSELVVMEKEVPMEQVIAQEVHVPSEPSPMEEEVKLETSPVPKEEPIKMEESPEQTPTPDLISNNESQDTPGAVNNHLHENHDAVQTPIQLQPASQHQVAQPSPRPAVAPDSQQNGPVLVSQQSQPSPMSSQQSDMAQNLILSSKDINDLAAKLHKNPEALAQATRGDCSGIFQHLLLHAQGNGQNMTPEMLQLKAAFFAQQQENEANQMMQAKMKQQTINKDRIKEQERVKRMYEENERKVEEDRREKQRKEEERQRLAAATAAATMATQKAAEALKQKQEVPRHGFQHVLSMMTPEARSLYEQFPGLSSYINRDSIGATNGVLHLPTQSIQRPSSTASTSSNPPKAPLQPSASVNQNTIDPAEIEEIRVQRWFYKHFPMVWTGRLALKSTEAMINLHLINGSETFLNDVLGRQVTEENPRRDSVKILQRLRLDNGQVEHIYRILTNPEYACCLALSSVNNIENLKENDTNLKSHFIDYLINKKIAGISSLGEVETKFKSARVHVFAPGEIVNRYLSELATSLHDYLQNTDTRYLLIVFTNDKADPNMTGPPSVASLAVPPVSST.

The span at 90-112 (QNSSMASMSSTPSSGQSSSPRNA) shows a compositional bias: low complexity. The tract at residues 90 to 152 (QNSSMASMSS…PHLSVQSQQR (63 aa)) is disordered. The RRM domain maps to 277–335 (CSVHVPHLDRHSPDHYRRRFESYGQVIDVDMVKSNDNKAFAVVQFTNIDDAQKALQDTN). 11 disordered regions span residues 439 to 632 (EVAA…LELD), 737 to 767 (ATDSKELGRDQPAGGRTSGRPSLDESRTNRL), 785 to 849 (LCIG…GRPA), 874 to 896 (PTHDEMMAPRGTPPSRRSSETMV), 921 to 986 (LIAA…PSNA), 993 to 1012 (RSQSMTSGDPKKSAPSTPVV), 1025 to 1844 (SNQP…EDSE), 1858 to 1918 (IAQE…VNNH), 1932 to 1976 (LQPA…QQSD), 2077 to 2103 (EENERKVEEDRREKQRKEEERQRLAAA), and 2172 to 2200 (SIQRPSSTASTSSNPPKAPLQPSASVNQN). A compositionally biased stretch (polar residues) spans 443–456 (RSSSPTSKSENDQG). Acidic residues predominate over residues 512–529 (EDSDEQNDVDEEDDEDVV). Composition is skewed to basic and acidic residues over residues 530 to 541 (SEEKRHEPEEGK), 548 to 564 (GHRDESNGDKDHEDSSE), and 573 to 586 (SHHETSHSPEKDSE). Positions 587–603 (AYQSRSFSPLNYQSQSP) are enriched in polar residues. Over residues 618-627 (SPTTSSASSS) the composition is skewed to low complexity. Composition is skewed to polar residues over residues 791–826 (TPSTPFPTSQPLLVNTTHLPGTSQPSTSGGITTPRS) and 837–849 (SRHNSMSSTGRPA). A compositionally biased stretch (polar residues) spans 924-946 (ATSTGTHSVSSSAHSTPRHSISG). The span at 966–978 (SRPEKVQIRHDTI) shows a compositional bias: basic and acidic residues. Over residues 1043–1052 (SALQNIQNHQ) the composition is skewed to polar residues. Low complexity predominate over residues 1053 to 1070 (PPHSNANSTPSTPSTSTH). The segment covering 1086-1153 (KEKEEREREA…KVRKKAEKEK (68 aa)) has biased composition (basic and acidic residues). The segment covering 1165–1177 (SDESDSDSNDELD) has biased composition (acidic residues). Composition is skewed to basic and acidic residues over residues 1178–1195 (LDVRKSTKEMTQEEKDHQ), 1218–1227 (RAHDSFEKMQ), 1279–1293 (ADQRLKVLKEREKGE), 1304–1320 (NDAGEIHQQRLTEDREN), 1335–1355 (QGERKNVPKRMRRDDSEDAAA), and 1376–1398 (RRSSEDESKKNAKRDFRDIPHED). Composition is skewed to low complexity over residues 1456–1471 (PKHLSPKTSTSSTKRS) and 1488–1498 (TTSSTSTATTS). Over residues 1534-1547 (SMNSAADSPMSTTG) the composition is skewed to polar residues. Over residues 1570-1595 (SSSGQHDSSSGSSSDSSSSDGSTSSD) the composition is skewed to low complexity. Basic and acidic residues-rich tracts occupy residues 1679-1691 (SEEHEDSHEHGDS) and 1703-1726 (EHQEEKEELENKILDVAAEHHEEQ). The span at 1749-1770 (TQAQEKSAHTLISDQETDQAVQ) shows a compositional bias: polar residues. The span at 1792 to 1805 (NEKEVSGKDPHNIK) shows a compositional bias: basic and acidic residues. Polar residues predominate over residues 1809 to 1826 (PLNNGHTDLLFSPSSSAH). Basic and acidic residues-rich tracts occupy residues 1827–1836 (ASEKQSTKSE) and 1873–1892 (EEVKLETSPVPKEEPIKMEE). Composition is skewed to polar residues over residues 1895–1911 (EQTPTPDLISNNESQDT) and 1932–1942 (LQPASQHQVAQ). Low complexity predominate over residues 1962–1975 (SQQSQPSPMSSQQS). The stretch at 2049–2110 (NQMMQAKMKQ…AAATAAATMA (62 aa)) forms a coiled coil. A compositionally biased stretch (basic and acidic residues) spans 2077–2099 (EENERKVEEDRREKQRKEEERQR). The span at 2176–2186 (PSSTASTSSNP) shows a compositional bias: low complexity. Residues 2213–2383 (QRWFYKHFPM…TRYLLIVFTN (171 aa)) enclose the SPOC domain.

Isoform d interacts with daf-12. In terms of tissue distribution, isoform d is widely expressed: detected in the hypodermis, seam cells, intestine, somatic gonad, neurons, vulval precursors, body wall muscle and pharynx.

The protein resides in the nucleus. In terms of biological role, probable transcriptional corepressor which modulates activity of the nuclear hormone receptor daf-12 to regulate the dauer diapause. This Caenorhabditis elegans protein is Daf-12-interacting protein 1.